The following is a 29-amino-acid chain: Dander allergen Equ c 2.0101 (29 aa).

It belongs to the calycin superfamily. Lipocalin family.

It localises to the secreted. The polypeptide is Dander allergen Equ c 2.0101 (Equus caballus (Horse)).